Here is an 888-residue protein sequence, read N- to C-terminus: Translation initiation factor IF-2 (888 aa).

Disordered stretches follow at residues 96-122 (TTKQDESDAAGKRAAEDVSLRTAEAPE) and 158-302 (ELKE…SAPT). Basic and acidic residues-rich tracts occupy residues 98-114 (KQDESDAAGKRAAEDVS) and 158-167 (ELKEKQEKRR). Positions 181–206 (TQVQEPGSETAAVSGSVAATQPESTE) are enriched in polar residues. Residues 207 to 225 (TAAVTPSATITVTTQTTPA) show a composition bias toward low complexity. 2 stretches are compositionally biased toward basic and acidic residues: residues 226–243 (AKERAPQKPAVKPEEKGE) and 253–269 (EAWKDEPVKRRESKARG). A tr-type G domain is found at 390 to 559 (SRAPVVTVMG…LLQAEVLELK (170 aa)). The tract at residues 399–406 (GHVDHGKT) is G1. Position 399–406 (399–406 (GHVDHGKT)) interacts with GTP. Residues 424-428 (GITQH) are G2. A G3 region spans residues 445–448 (DTPG). GTP-binding positions include 445-449 (DTPGH) and 499-502 (NKMD). Positions 499-502 (NKMD) are G4. The tract at residues 535 to 537 (SAK) is G5.

It belongs to the TRAFAC class translation factor GTPase superfamily. Classic translation factor GTPase family. IF-2 subfamily.

It is found in the cytoplasm. Functionally, one of the essential components for the initiation of protein synthesis. Protects formylmethionyl-tRNA from spontaneous hydrolysis and promotes its binding to the 30S ribosomal subunits. Also involved in the hydrolysis of GTP during the formation of the 70S ribosomal complex. The sequence is that of Translation initiation factor IF-2 from Nitrosomonas eutropha (strain DSM 101675 / C91 / Nm57).